The following is a 218-amino-acid chain: 3,4-dihydroxy-2-butanone 4-phosphate synthase (218 aa).

D-ribulose 5-phosphate-binding positions include 38 to 39 (RE), aspartate 43, 151 to 155 (RRGHT), and glutamate 175. Glutamate 39 provides a ligand contact to Mg(2+). Positions 125–151 (PHAKPEDLARPGHVFPLRARPGGVMTR) are disordered. Histidine 154 provides a ligand contact to Mg(2+).

This sequence belongs to the DHBP synthase family. Homodimer. Requires Mg(2+) as cofactor. The cofactor is Mn(2+).

It catalyses the reaction D-ribulose 5-phosphate = (2S)-2-hydroxy-3-oxobutyl phosphate + formate + H(+). Its pathway is cofactor biosynthesis; riboflavin biosynthesis; 2-hydroxy-3-oxobutyl phosphate from D-ribulose 5-phosphate: step 1/1. Its function is as follows. Catalyzes the conversion of D-ribulose 5-phosphate to formate and 3,4-dihydroxy-2-butanone 4-phosphate. The protein is 3,4-dihydroxy-2-butanone 4-phosphate synthase of Vibrio parahaemolyticus serotype O3:K6 (strain RIMD 2210633).